A 1274-amino-acid chain; its full sequence is MEQNGLDHDSRSSIDTTINDTQKTFLEFRSYTQLSEKLASSSSYTAPPLNEDGPKGVASAVSQGSESVVSWTTLTHVYSILGAYGGPTCLYPTATYFLMGTSKGCVLIFNYNEHLQTILVPTLSEDPSIHSIRSPVKSIVICSDGTHVAASYETGNICIWNLNVGYRVKPTSEPTNGMTPTPALPAVLHIDDHVNKEITGLDFFGARHTALIVSDRTGKVSLYNGYRRGFWQLVYNSKKILDVNSSKEKLIRSKLSPLISREKISTNLLSVLTTTHFALILLSPHVSLMFQETVEPSVQNSLVVNSSISWTQNCSRVAYSVNNKISVISISSSDFNVQSASHSPEFAESILSIQWIDQLLLGVLTISHQFLVLHPQHDFKILLRLDFLIHDLMIPPNKYFVISRRSFYLLTNYSFKIGKFVSWSDITLRHILKGDYLGALEFIESLLQPYCPLANLLKLDNNTEERTKQLMEPFYNLSLAALRFLIKKDNADYNRVYQLLMVVVRVLQQSSKKLDSIPSLDVFLEQGLEFFELKDNAVYFEVVANIVAQGSVTSISPVLFRSIIDYYAKEENLKVIEDLIIMLNPTTLDVDLAVKLCQKYNLFDLLIYIWNKIFDDYQTPVVDLIYRISNQSEKCVIFNGPQVPPETTIFDYVTYILTGRQYPQNLSISPSDKCSKIQRELSAFIFSGFSIKWPSNSNHKLYICENPEEEPAFPYFHLLLKSNPSRFLAMLNEVFEASLFNDDNDMVASVGEAELVSRQYVIDLLLDAMKDTGNSDNIRVLVAIFIATSISKYPQFIKVSNQALDCVVNTICSSRVQGIYEISQIALESLLPYYHSRTTENFILELKEKNFNKVLFHIYKSENKYASALSLILETKDIEKEYNTDIVSITDYILKKCPPGSLECGKVTEVIETNFDLLLSRIGIEKCVTIFSDFDYNLHQEILEVKNEETQQKYLDKLFSTPNINNKVDKRLRNLHIELNCKYKSKREMILWLNGTVLSNAESLQILDLLNQDSNFEAAAIIHERLESFNLAVRDLLSFIEQCLNEGKTNISTLLESLRRAFDDCNSAGTEKKSCWILLITFLITLYGKYPSHDERKDLCNKLLQEAFLGLVRSKSSSQKDSGGEFWEIMSSVLEHQDVILMKVQDLKQLLLNVFNTYKLERSLSELIQKIIEDSSQDLVQQYRKFLSEGWSIHTDDCEICGKKIWGAGLDPLLFLAWENVQRHQDMISVDLKTPLVIFKCHHGFHQTCLENLAQKPDEYSCLICQTESNPKIV.

Met-1 bears the N-acetylmethionine mark. WD repeat units follow at residues 75 to 119 (THVY…QTIL), 131 to 170 (SIRSPVKSIVICSDGTHVAASYETGNICIWNLNVGYRVKP), and 193 to 233 (HVNK…FWQL). CHCR repeat units follow at residues 507-665 (LQQS…YPQN) and 915-1092 (FDLL…KYPS). The RING-type; atypical zinc finger occupies 1198-1266 (CEICGKKIWG…PDEYSCLICQ (69 aa)).

The protein belongs to the VPS8 family.

It is found in the golgi apparatus. The protein localises to the golgi stack. In terms of biological role, required for localization and recycling of the CPY sorting receptor (VPS10) to the late-Golgi compartment. Involved in the retention of proteins to the late-Golgi. Plays an integral role in the complex vacuolar protein sorting process. In Saccharomyces cerevisiae (strain ATCC 204508 / S288c) (Baker's yeast), this protein is Vacuolar protein sorting-associated protein 8 (VPS8).